The sequence spans 55 residues: Large ribosomal subunit protein bL33 (55 aa).

The protein belongs to the bacterial ribosomal protein bL33 family.

In Proteus mirabilis (strain HI4320), this protein is Large ribosomal subunit protein bL33.